We begin with the raw amino-acid sequence, 512 residues long: ATP synthase subunit alpha 1 (512 aa).

Position 169 to 176 (169 to 176) interacts with ATP; it reads GDRQTGKT.

The protein belongs to the ATPase alpha/beta chains family. In terms of assembly, F-type ATPases have 2 components, CF(1) - the catalytic core - and CF(0) - the membrane proton channel. CF(1) has five subunits: alpha(3), beta(3), gamma(1), delta(1), epsilon(1). CF(0) has four main subunits: a(1), b(1), b'(1) and c(9-12).

It localises to the cell inner membrane. The catalysed reaction is ATP + H2O + 4 H(+)(in) = ADP + phosphate + 5 H(+)(out). Its function is as follows. Produces ATP from ADP in the presence of a proton gradient across the membrane. The alpha chain is a regulatory subunit. The polypeptide is ATP synthase subunit alpha 1 (Cereibacter sphaeroides (strain ATCC 17029 / ATH 2.4.9) (Rhodobacter sphaeroides)).